The following is a 62-amino-acid chain: MARKCFFTGKGPMVGNNVSHANNKTKKRSLPNLRSIRLKLEDGTSVRVKVAASTLRTIKKYS.

The protein belongs to the bacterial ribosomal protein bL28 family.

This Helicobacter hepaticus (strain ATCC 51449 / 3B1) protein is Large ribosomal subunit protein bL28.